A 299-amino-acid chain; its full sequence is Peroxisomal biogenesis factor 19 (299 aa).

Residues 1–61 (MAAAEEGCGV…KRAPGDTAKD (61 aa)) are disordered. Position 2 is an N-acetylalanine (A2). Residues 2-56 (AAAEEGCGVGVEDDRELEELLESALDDFDKAKPSPEHAPTISAPDASGPQKRAPG) are docking to the peroxisome membrane and binding to PEX3. Residues 2-91 (AAAEEGCGVG…QATAEFEKAM (90 aa)) form a necessary for PEX19 function on peroxisome biogenesis region. Positions 12 to 27 (VEDDRELEELLESALD) are enriched in acidic residues. S35 and S66 each carry phosphoserine. Residue T236 is modified to Phosphothreonine. Position 296 is a cysteine methyl ester (C296). C296 carries the S-farnesyl cysteine lipid modification. The propeptide at 297-299 (LIM) is removed in mature form.

It belongs to the peroxin-19 family. Interacts with a broad range of peroxisomal membrane proteins, including PEX3, PEX10, PEX11A, PEX11B, PEX12, PEX13, PEX14 and PEX16, PXMP2/PMP22, PXMP4/PMP24, SLC25A17/PMP34, ABCD1/ALDP, ABCD2/ALDRP, and ABCD3/PMP70. Also interacts with the tumor suppressor CDKN2A/p19ARF.

The protein resides in the cytoplasm. The protein localises to the peroxisome membrane. In terms of biological role, necessary for early peroxisomal biogenesis. Acts both as a cytosolic chaperone and as an import receptor for peroxisomal membrane proteins (PMPs). Binds and stabilizes newly synthesized PMPs in the cytoplasm by interacting with their hydrophobic membrane-spanning domains, and targets them to the peroxisome membrane by binding to the integral membrane protein PEX3. Excludes CDKN2A from the nucleus and prevents its interaction with MDM2, which results in active degradation of TP53. This is Peroxisomal biogenesis factor 19 (Pex19) from Mus musculus (Mouse).